Here is an 871-residue protein sequence, read N- to C-terminus: Alanine--tRNA ligase (871 aa).

The Zn(2+) site is built by histidine 563, histidine 567, cysteine 665, and histidine 669.

Belongs to the class-II aminoacyl-tRNA synthetase family. Zn(2+) is required as a cofactor.

Its subcellular location is the cytoplasm. The catalysed reaction is tRNA(Ala) + L-alanine + ATP = L-alanyl-tRNA(Ala) + AMP + diphosphate. Functionally, catalyzes the attachment of alanine to tRNA(Ala) in a two-step reaction: alanine is first activated by ATP to form Ala-AMP and then transferred to the acceptor end of tRNA(Ala). Also edits incorrectly charged Ser-tRNA(Ala) and Gly-tRNA(Ala) via its editing domain. The polypeptide is Alanine--tRNA ligase (Christiangramia forsetii (strain DSM 17595 / CGMCC 1.15422 / KT0803) (Gramella forsetii)).